The sequence spans 376 residues: Carbamoyl phosphate synthase small chain (376 aa).

The CPSase stretch occupies residues 1 to 187 (MRAFLALEDG…AADGAYAWPG (187 aa)). The L-glutamine site is built by S45, G239, and G241. The Glutamine amidotransferase type-1 domain maps to 191-376 (RLVVYDYGIK…RGMVREAVGR (186 aa)). Residue C266 is the Nucleophile of the active site. L-glutamine-binding residues include L267, Q270, N308, G310, and F311. Catalysis depends on residues H349 and E351.

This sequence belongs to the CarA family. As to quaternary structure, composed of two chains; the small (or glutamine) chain promotes the hydrolysis of glutamine to ammonia, which is used by the large (or ammonia) chain to synthesize carbamoyl phosphate. Tetramer of heterodimers (alpha,beta)4.

The enzyme catalyses hydrogencarbonate + L-glutamine + 2 ATP + H2O = carbamoyl phosphate + L-glutamate + 2 ADP + phosphate + 2 H(+). The catalysed reaction is L-glutamine + H2O = L-glutamate + NH4(+). It participates in amino-acid biosynthesis; L-arginine biosynthesis; carbamoyl phosphate from bicarbonate: step 1/1. The protein operates within pyrimidine metabolism; UMP biosynthesis via de novo pathway; (S)-dihydroorotate from bicarbonate: step 1/3. Functionally, small subunit of the glutamine-dependent carbamoyl phosphate synthetase (CPSase). CPSase catalyzes the formation of carbamoyl phosphate from the ammonia moiety of glutamine, carbonate, and phosphate donated by ATP, constituting the first step of 2 biosynthetic pathways, one leading to arginine and/or urea and the other to pyrimidine nucleotides. The small subunit (glutamine amidotransferase) binds and cleaves glutamine to supply the large subunit with the substrate ammonia. This Nitratidesulfovibrio vulgaris (strain DSM 19637 / Miyazaki F) (Desulfovibrio vulgaris) protein is Carbamoyl phosphate synthase small chain.